Here is a 93-residue protein sequence, read N- to C-terminus: Zinc metalloproteinase-disintegrin-like leucurogin (93 aa).

In terms of domain architecture, Disintegrin spans 8-93; sequence PPVCGNELLE…SECPADVGHK (86 aa). Ca(2+) contacts are provided by valine 10, asparagine 13, leucine 15, glutamate 17, glutamate 20, and aspartate 23. Cystine bridges form between cysteine 11-cysteine 40, cysteine 22-cysteine 35, cysteine 24-cysteine 30, cysteine 34-cysteine 57, cysteine 48-cysteine 54, cysteine 53-cysteine 79, and cysteine 66-cysteine 86. A D/ECD-tripeptide motif is present at residues 72–74; it reads ECD. Positions 74, 75, 77, 89, and 90 each coordinate Ca(2+). Residues 74-93 are disordered; sequence DPAEHCTGQSSECPADVGHK.

It belongs to the venom metalloproteinase (M12B) family. P-III subfamily. As to quaternary structure, monomer. Zn(2+) is required as a cofactor. In terms of processing, N-glycosylated. Expressed by the venom gland.

The protein localises to the secreted. Functionally, snake venom zinc metalloprotease that possesses hemorrhagic activity. The disintegrin-like domain has been expressed and named leucurogin. This recombinant disintegrin is able to inhibit collagen-induced platelet aggregation but not ADP- or arachidonic acid-induced platelet aggregation. Furthermore, it inhibits the adhesion of human fibroblasts to collagen type I. It also reduces adhesion and migration of human fibroblasts and inhibits migration and proliferation of human and mouse melanoma cell lines (BLM, and B16-F10-Nex2). In vitro, it inhibits the vascular structures formation by endothelial cells. In addition, it inhibits the growth of experimental Ehrlich tumor and has anti-angiogenesis effect on the sponge implant model. In vivo, when intraperitoneally injected into mice, it inhibits lung metastasis of B16F10 Nex-2 cells. In the treatment of human melanoma, grafted intradermally in the nude mice flank, it inhibits tumor growth. The protein is Zinc metalloproteinase-disintegrin-like leucurogin of Bothrops leucurus (Whitetail lancehead).